Reading from the N-terminus, the 2063-residue chain is Rho guanine nucleotide exchange factor 17 (2063 aa).

Disordered regions lie at residues 22–365 (WSGG…MSDS), 380–466 (YLAS…SNPD), 485–581 (LRVR…AEED), and 602–958 (IQRM…RHVR). A compositionally biased stretch (low complexity) spans 65 to 76 (PLAAPAQPRPLR). Over residues 87-96 (RRFDAPRLDD) the composition is skewed to basic and acidic residues. Positions 108-122 (PAAAEEAAEGPARGA) are enriched in low complexity. S142 and S152 each carry phosphoserine. Residues 225-250 (AGARASCSSSSIAASYPVSRSRAASS) are compositionally biased toward low complexity. Position 310 is a phosphoserine (S310). Over residues 313–323 (LNLSSMNSAGV) the composition is skewed to polar residues. Residues S326, S332, S383, S387, S395, S410, and S420 each carry the phosphoserine modification. Polar residues predominate over residues 388 to 397 (RGSSRYSSTE). Basic and acidic residues predominate over residues 445–456 (ALRDGGFEPEKS). Phosphoserine is present on residues S461 and S546. Residues 562 to 573 (SALKSSSSELLL) show a composition bias toward low complexity. S619 carries the phosphoserine modification. Over residues 671–680 (LSSSSAQTNH) the composition is skewed to polar residues. S696 is modified (phosphoserine). Residues T699 and T702 each carry the phosphothreonine modification. S735 bears the Phosphoserine mark. A compositionally biased stretch (polar residues) spans 754-765 (SVDSNLLGSLSP). The span at 827 to 836 (SLSDPSRRGE) shows a compositional bias: basic and acidic residues. Position 914 is a phosphoserine (S914). Over residues 917-928 (LIRRGSKKRPAR) the composition is skewed to basic residues. A compositionally biased stretch (basic and acidic residues) spans 930–939 (SHQELRRDEG). A phosphoserine mark is found at S961 and S1002. The interval 1034 to 1060 (APPSAEAKPPEAARPADEPTPASKCCS) is disordered. The span at 1041-1050 (KPPEAARPAD) shows a compositional bias: basic and acidic residues. The DH domain maps to 1066 to 1254 (MRKHVAMTLL…KQVAERINKG (189 aa)). At S1331 the chain carries Phosphoserine. Disordered stretches follow at residues 1564–1584 (HREP…PAGP), 1616–1719 (GLEM…SSHG), 1991–2020 (TPPP…PAPA), and 2036–2055 (FRLS…DDST). The span at 1568–1582 (PPSLRSPPETAPEPA) shows a compositional bias: pro residues. The segment covering 1644-1680 (SPSPSGTLQSQASRSTISSSFGNEETPSSKEATAETT) has biased composition (low complexity). Positions 2004–2013 (PSLEHRDSPW) are enriched in basic and acidic residues.

In terms of tissue distribution, highly expressed in the heart.

Functionally, acts as a guanine nucleotide exchange factor (GEF) for RhoA GTPases. The chain is Rho guanine nucleotide exchange factor 17 (ARHGEF17) from Homo sapiens (Human).